An 899-amino-acid polypeptide reads, in one-letter code: CNK3/IPCEF1 fusion protein (899 aa).

Positions 7 to 72 (WSPKQVVDWT…LEAVDLLCAL (66 aa)) constitute an SAM domain. The 95-residue stretch at 80 to 174 (NMKNLVLKLR…TTVQKDCFVA (95 aa)) folds into the CRIC domain. Residues 211-293 (EVHLPNIKPG…GVVLLLKKRP (83 aa)) form the PDZ domain. Disordered stretches follow at residues 309–334 (WKPPLVQTSPPPATTQSPESTMDTSL) and 347–390 (PPPP…FLDQ). The DUF1170 domain occupies 332-457 (TSLKKEKSAI…ARPRGHGRKA (126 aa)). Serine 383 is modified (phosphoserine). Residues 503-602 (HADCQGWLYK…WLNKLGSAVI (100 aa)) enclose the PH domain. Disordered regions lie at residues 605 to 687 (ESTT…PDTV), 735 to 770 (LSSDDTSSLSSNHDHLTVPDKPAGSKIMDKEETKVS), and 868 to 899 (QQQRASPAPDDTDDTPQELKKSPSSPSVENSI). Over residues 613–624 (CYSESEQEDPEI) the composition is skewed to acidic residues. Residues 634–662 (ASQTQSLTAQQASSSSPSLSGTSYSFSSL) are compositionally biased toward low complexity. Over residues 663–676 (ENTVKTPSSFPSSL) the composition is skewed to polar residues. Positions 735-745 (LSSDDTSSLSS) are enriched in low complexity. The segment covering 761-770 (IMDKEETKVS) has biased composition (basic and acidic residues). The required for interaction with CYTH2 stretch occupies residues 851 to 899 (KYREWKVMNTLLIQDIYQQQRASPAPDDTDDTPQELKKSPSSPSVENSI). Phosphoserine is present on serine 873. The segment covering 889–899 (SPSSPSVENSI) has biased composition (polar residues).

The protein belongs to the CNKSR family.

Functionally, required for hepatocyte growth factor (HGF)-dependent activation of Arf6 and HGF-stimulated cell migration. This is CNK3/IPCEF1 fusion protein (CNK3/IPCEF1) from Homo sapiens (Human).